The chain runs to 629 residues: 1-deoxy-D-xylulose-5-phosphate synthase (629 aa).

Residues His85 and 126–128 contribute to the thiamine diphosphate site; that span reads GHS. Asp157 serves as a coordination point for Mg(2+). Thiamine diphosphate contacts are provided by residues 158-159, Asn186, Tyr293, and Glu373; that span reads GS. Residue Asn186 coordinates Mg(2+).

Belongs to the transketolase family. DXPS subfamily. Homodimer. Mg(2+) is required as a cofactor. The cofactor is thiamine diphosphate.

The catalysed reaction is D-glyceraldehyde 3-phosphate + pyruvate + H(+) = 1-deoxy-D-xylulose 5-phosphate + CO2. It participates in metabolic intermediate biosynthesis; 1-deoxy-D-xylulose 5-phosphate biosynthesis; 1-deoxy-D-xylulose 5-phosphate from D-glyceraldehyde 3-phosphate and pyruvate: step 1/1. In terms of biological role, catalyzes the acyloin condensation reaction between C atoms 2 and 3 of pyruvate and glyceraldehyde 3-phosphate to yield 1-deoxy-D-xylulose-5-phosphate (DXP). This Helicobacter hepaticus (strain ATCC 51449 / 3B1) protein is 1-deoxy-D-xylulose-5-phosphate synthase.